Here is an 819-residue protein sequence, read N- to C-terminus: uncharacterized protein (819 aa).

S16 is modified (phosphoserine). 2 disordered regions span residues 28 to 83 (SNTQ…PPTV) and 96 to 134 (PTFT…ASKI). The segment at residues 36–63 (KIRFTENENDLSPERAQKEPVSIPHGRY) is a DNA-binding region (zn(2)-C6 fungal-type). 2 stretches are compositionally biased toward polar residues: residues 64–77 (TWST…SHLP) and 96–118 (PTFT…NDYI).

It localises to the nucleus. This is an uncharacterized protein from Schizosaccharomyces pombe (strain 972 / ATCC 24843) (Fission yeast).